Consider the following 355-residue polypeptide: Ribosomal RNA large subunit methyltransferase M (355 aa).

S-adenosyl-L-methionine-binding positions include Ser191, 224 to 227 (APGG), Asp243, Asp263, and Asp279. Lys308 serves as the catalytic Proton acceptor.

It belongs to the class I-like SAM-binding methyltransferase superfamily. RNA methyltransferase RlmE family. RlmM subfamily. As to quaternary structure, monomer.

It localises to the cytoplasm. The enzyme catalyses cytidine(2498) in 23S rRNA + S-adenosyl-L-methionine = 2'-O-methylcytidine(2498) in 23S rRNA + S-adenosyl-L-homocysteine + H(+). Its function is as follows. Catalyzes the 2'-O-methylation at nucleotide C2498 in 23S rRNA. The polypeptide is Ribosomal RNA large subunit methyltransferase M (Stenotrophomonas maltophilia (strain K279a)).